The sequence spans 500 residues: Guanosine-5'-triphosphate,3'-diphosphate pyrophosphatase (500 aa).

This sequence belongs to the GppA/Ppx family. GppA subfamily.

The catalysed reaction is guanosine 3'-diphosphate 5'-triphosphate + H2O = guanosine 3',5'-bis(diphosphate) + phosphate + H(+). Its pathway is purine metabolism; ppGpp biosynthesis; ppGpp from GTP: step 2/2. Catalyzes the conversion of pppGpp to ppGpp. Guanosine pentaphosphate (pppGpp) is a cytoplasmic signaling molecule which together with ppGpp controls the 'stringent response', an adaptive process that allows bacteria to respond to amino acid starvation, resulting in the coordinated regulation of numerous cellular activities. This is Guanosine-5'-triphosphate,3'-diphosphate pyrophosphatase from Photorhabdus laumondii subsp. laumondii (strain DSM 15139 / CIP 105565 / TT01) (Photorhabdus luminescens subsp. laumondii).